Here is a 450-residue protein sequence, read N- to C-terminus: Tubulin beta-3 chain (450 aa).

Positions 1-4 match the MREI motif motif; that stretch reads MREI. 4 residues coordinate GDP: Gly-10, Gln-11, Cys-12, and Gln-15. Position 11 (Gln-11) interacts with GTP. GTP is bound at residue Glu-69. Position 69 (Glu-69) interacts with Mg(2+). 5 residues coordinate GDP: Asn-99, Ser-138, Gly-142, Thr-143, and Gly-144. Residues Ser-138, Gly-142, Thr-143, and Gly-144 each coordinate GTP. Ser-172 carries the post-translational modification Phosphoserine; by CDK1. GDP contacts are provided by Asp-177, Asn-204, Tyr-222, and Asn-226. Asn-204 serves as a coordination point for GTP. Asn-226 provides a ligand contact to GTP. Residues 425 to 450 form a disordered region; that stretch reads YQDATAEEEGEMYEDDEEESEAQGPK. Positions 429-450 are enriched in acidic residues; that stretch reads TAEEEGEMYEDDEEESEAQGPK. 5-glutamyl polyglutamate is present on Glu-438. Residue Ser-444 is modified to Phosphoserine.

It belongs to the tubulin family. As to quaternary structure, heterodimer of alpha- and beta-tubulin. A typical microtubule is a hollow water-filled tube with an outer diameter of 25 nm and an inner diameter of 15 nM. Alpha-beta heterodimers associate head-to-tail to form protofilaments running lengthwise along the microtubule wall with the beta-tubulin subunit facing the microtubule plus end conferring a structural polarity. Microtubules usually have 13 protofilaments but different protofilament numbers can be found in some organisms and specialized cells. Interacts with gamma-tubulin; the interaction allows microtubules to nucleate from the gamma-tubulin ring complex (gTuRC). Interacts with UNC5C (via cytoplasmic domain); this interaction is decreased by NTN1/Netrin-1. Interacts with NLRP5/MATER at cytoskeleton microtubules. Interacts with DPYSL5. Interacts with CFAP61. Mg(2+) is required as a cofactor. Some glutamate residues at the C-terminus are polyglutamylated, resulting in polyglutamate chains on the gamma-carboxyl group. Polyglutamylation plays a key role in microtubule severing by spastin (SPAST). SPAST preferentially recognizes and acts on microtubules decorated with short polyglutamate tails: severing activity by SPAST increases as the number of glutamates per tubulin rises from one to eight, but decreases beyond this glutamylation threshold. Glutamylation is also involved in cilia motility. In terms of processing, some glutamate residues at the C-terminus are monoglycylated but not polyglycylated due to the absence of functional TTLL10 in human. Monoglycylation is mainly limited to tubulin incorporated into cilia and flagella axonemes, which is required for their stability and maintenance. Flagella glycylation controls sperm motility. Both polyglutamylation and monoglycylation can coexist on the same protein on adjacent residues, and lowering glycylation levels increases polyglutamylation, and reciprocally. Post-translationally, phosphorylated on Ser-172 by CDK1 during the cell cycle, from metaphase to telophase, but not in interphase. This phosphorylation inhibits tubulin incorporation into microtubules. Expression is primarily restricted to central and peripheral nervous system. Greatly increased expression in most cancerous tissues.

Its subcellular location is the cytoplasm. The protein resides in the cytoskeleton. It is found in the cell projection. It localises to the growth cone. The protein localises to the lamellipodium. Its subcellular location is the filopodium. Its function is as follows. Tubulin is the major constituent of microtubules, protein filaments consisting of alpha- and beta-tubulin heterodimers. Microtubules grow by the addition of GTP-tubulin dimers to the microtubule end, where a stabilizing cap forms. Below the cap, alpha-beta tubulin heterodimers are in GDP-bound state, owing to GTPase activity of alpha-tubulin. TUBB3 plays a critical role in proper axon guidance and maintenance. Binding of NTN1/Netrin-1 to its receptor UNC5C might cause dissociation of UNC5C from polymerized TUBB3 in microtubules and thereby lead to increased microtubule dynamics and axon repulsion. Plays a role in dorsal root ganglion axon projection towards the spinal cord. The sequence is that of Tubulin beta-3 chain (TUBB3) from Homo sapiens (Human).